The sequence spans 594 residues: Metastasis-associated protein MTA3 (594 aa).

The 147-residue stretch at Met1–Lys147 folds into the BAH domain. The region spanning Gly148–Gly259 is the ELM2 domain. Residues Asp266–Arg318 form the SANT domain. Residues Cys379 to Cys406 form a GATA-type; atypical zinc finger. Residues Ser428 and Ser430 each carry the phosphoserine modification. Thr455 carries the post-translational modification Phosphothreonine. Residue Ser519 is modified to Phosphoserine.

This sequence belongs to the metastasis-associated protein family. As to quaternary structure, component of the nucleosome remodeling and deacetylase (NuRD) repressor complex, composed of core proteins MTA1, MTA2, MTA3, RBBP4, RBBP7, HDAC1, HDAC2, MBD2, MBD3, and peripherally associated proteins CDK2AP1, CDK2AP2, GATAD2A, GATAD2B, CHD3, CHD4 and CHD5. The exact stoichiometry of the NuRD complex is unknown, and some subunits such as MBD2 and MBD3, GATAD2A and GATAD2B, and CHD3, CHD4 and CHD5 define mutually exclusive NuRD complexes. Interacts with BCL6. Interacts with NACC2. Interacts with PWWP2B. As to expression, expressed in germinal centers of lymphoid tissues. No expression in nonepithelial cells.

The protein localises to the nucleus. It localises to the cytoplasm. Functionally, acts as a component of the histone deacetylase NuRD complex which participates in the remodeling of chromatin. Plays a role in maintenance of the normal epithelial architecture through the repression of SNAI1 transcription in a histone deacetylase-dependent manner, and thus the regulation of E-cadherin levels. Contributes to transcriptional repression by BCL6. This is Metastasis-associated protein MTA3 (MTA3) from Homo sapiens (Human).